We begin with the raw amino-acid sequence, 575 residues long: Septation ring formation regulator EzrA (575 aa).

The Extracellular segment spans residues 1–8; it reads MSNGQLIY. Residues 9–27 form a helical membrane-spanning segment; that stretch reads LMVAIAVILVLAYVVAIFL. At 28-575 the chain is on the cytoplasmic side; that stretch reads RKRNEGRLEA…YEKTRETIRF (548 aa). Coiled coils occupy residues 105 to 191, 265 to 301, 354 to 416, and 456 to 526; these read LKAS…FVTL, LYEAFKKNQENIRQLELDNAEYENGQAQEEINALYDI, VRRI…IEKD, and TASN…IQEA.

It belongs to the EzrA family.

Its subcellular location is the cell membrane. In terms of biological role, negative regulator of FtsZ ring formation; modulates the frequency and position of FtsZ ring formation. Inhibits FtsZ ring formation at polar sites. Interacts either with FtsZ or with one of its binding partners to promote depolymerization. The chain is Septation ring formation regulator EzrA from Streptococcus pneumoniae (strain ATCC BAA-255 / R6).